The chain runs to 317 residues: tRNA-cytidine(32) 2-sulfurtransferase (317 aa).

Residues 46–51 (SGGKDS) carry the PP-loop motif motif. Residues Cys-121, Cys-124, and Cys-212 each contribute to the [4Fe-4S] cluster site.

The protein belongs to the TtcA family. In terms of assembly, homodimer. Requires Mg(2+) as cofactor. It depends on [4Fe-4S] cluster as a cofactor.

The protein resides in the cytoplasm. The enzyme catalyses cytidine(32) in tRNA + S-sulfanyl-L-cysteinyl-[cysteine desulfurase] + AH2 + ATP = 2-thiocytidine(32) in tRNA + L-cysteinyl-[cysteine desulfurase] + A + AMP + diphosphate + H(+). It functions in the pathway tRNA modification. Its function is as follows. Catalyzes the ATP-dependent 2-thiolation of cytidine in position 32 of tRNA, to form 2-thiocytidine (s(2)C32). The sulfur atoms are provided by the cysteine/cysteine desulfurase (IscS) system. The sequence is that of tRNA-cytidine(32) 2-sulfurtransferase from Shewanella loihica (strain ATCC BAA-1088 / PV-4).